The following is a 363-amino-acid chain: NADH-quinone oxidoreductase subunit H (363 aa).

10 helical membrane passes run V29–W49, G62–F82, V94–V114, V127–G147, V166–S186, F202–V222, I239–L257, I264–V286, L293–A313, and F339–I359.

Belongs to the complex I subunit 1 family. As to quaternary structure, NDH-1 is composed of 14 different subunits. Subunits NuoA, H, J, K, L, M, N constitute the membrane sector of the complex.

It localises to the cell inner membrane. The catalysed reaction is a quinone + NADH + 5 H(+)(in) = a quinol + NAD(+) + 4 H(+)(out). Functionally, NDH-1 shuttles electrons from NADH, via FMN and iron-sulfur (Fe-S) centers, to quinones in the respiratory chain. The immediate electron acceptor for the enzyme in this species is believed to be ubiquinone. Couples the redox reaction to proton translocation (for every two electrons transferred, four hydrogen ions are translocated across the cytoplasmic membrane), and thus conserves the redox energy in a proton gradient. This subunit may bind ubiquinone. The polypeptide is NADH-quinone oxidoreductase subunit H (Xylella fastidiosa (strain M12)).